Consider the following 253-residue polypeptide: Tetraspanin-11 (253 aa).

Helical transmembrane passes span 19–39 (LLFVFNFFFWVGGAAVLAVGI), 63–83 (ILIFAGVLVMVTGFLGFGAIL), and 93–113 (YFCLLLVIFLVELVAGVLAHV). N-linked (GlcNAc...) asparagine glycosylation is present at asparagine 127. The helical transmembrane segment at 220–240 (LLLMGAVGIGVACLQICGMVL) threads the bilayer.

This sequence belongs to the tetraspanin (TM4SF) family.

Its subcellular location is the membrane. The chain is Tetraspanin-11 (TSPAN11) from Homo sapiens (Human).